The chain runs to 95 residues: Large ribosomal subunit protein bL27 (95 aa).

A propeptide spanning residues 1–12 is cleaved from the precursor; it reads MLLIKKINLQFF. A disordered region spans residues 17–37; the sequence is GVGSTKNGRDSNPKYLGAKKS.

It belongs to the bacterial ribosomal protein bL27 family. The N-terminus is cleaved by ribosomal processing cysteine protease Prp.

The protein is Large ribosomal subunit protein bL27 of Malacoplasma penetrans (strain HF-2) (Mycoplasma penetrans).